Here is a 465-residue protein sequence, read N- to C-terminus: Presenilin spe-4 (465 aa).

Residues M1–R18 are Cytoplasmic-facing. A helical transmembrane segment spans residues W19–Y39. Topologically, residues N40–N71 are lumenal. The chain crosses the membrane as a helical span at residues G72–F92. Topologically, residues D93 to R96 are cytoplasmic. A helical membrane pass occupies residues I97–T117. The Lumenal portion of the chain corresponds to L118–M136. The helical transmembrane segment at T137 to F157 threads the bilayer. Residues S158 to S160 are Cytoplasmic-facing. A helical membrane pass occupies residues S161–L181. The Lumenal portion of the chain corresponds to R182–W190. A helical membrane pass occupies residues F191–L211. D200 is a catalytic residue. The Cytoplasmic portion of the chain corresponds to K212–R389. Positions I287 to D356 are disordered. Positions S326–S350 are enriched in low complexity. The chain crosses the membrane as a helical span at residues L390–C410. Residue D394 is part of the active site. A topological domain (lumenal) is located at residue P411. Residues F412–F432 traverse the membrane as a helical segment. The Cytoplasmic portion of the chain corresponds to S433 to T439. The PAL motif lies at P440 to L442. Positions P440–W460 form an intramembrane region, helical. The Cytoplasmic portion of the chain corresponds to E461–G465.

Belongs to the peptidase A22A family. Homodimer. Potential component of the gamma-secretase complex, a complex probably composed of the presenilin homodimer (sel-12, hop-1 or spe-4), nicastrin (aph-2), aph-1 and pen-2.

It localises to the endoplasmic reticulum membrane. The protein localises to the golgi apparatus. Its subcellular location is the cis-Golgi network membrane. Its function is as follows. Potential catalytic subunit of the gamma-secretase complex during spermatogenesis, an endoprotease complex that catalyzes the intramembrane cleavage of integral membrane proteins such as Notch receptors (lin-12 or glp-1). Involved in spermatid formation during meiosis II. May be required for proper localization of macromolecules that are subject to asymmetric partitioning during spermatogenesis. The sequence is that of Presenilin spe-4 from Caenorhabditis elegans.